Here is a 285-residue protein sequence, read N- to C-terminus: Polyamine aminopropyltransferase (285 aa).

Positions Asp5–Lys241 constitute a PABS domain. Gln35 contacts S-methyl-5'-thioadenosine. His66 and Asp90 together coordinate spermidine. Residues Asp110 and Asp141–Gly142 each bind S-methyl-5'-thioadenosine. The Proton acceptor role is filled by Asp160. Asp160–Asp163 is a spermidine binding site. Residue Pro167 coordinates S-methyl-5'-thioadenosine.

This sequence belongs to the spermidine/spermine synthase family. In terms of assembly, homodimer or homotetramer.

It is found in the cytoplasm. It catalyses the reaction S-adenosyl 3-(methylsulfanyl)propylamine + putrescine = S-methyl-5'-thioadenosine + spermidine + H(+). Its pathway is amine and polyamine biosynthesis; spermidine biosynthesis; spermidine from putrescine: step 1/1. Functionally, catalyzes the irreversible transfer of a propylamine group from the amino donor S-adenosylmethioninamine (decarboxy-AdoMet) to putrescine (1,4-diaminobutane) to yield spermidine. This is Polyamine aminopropyltransferase from Xanthomonas oryzae pv. oryzae (strain MAFF 311018).